Consider the following 97-residue polypeptide: Aspartyl/glutamyl-tRNA(Asn/Gln) amidotransferase subunit C (97 aa).

Belongs to the GatC family. In terms of assembly, heterotrimer of A, B and C subunits.

It carries out the reaction L-glutamyl-tRNA(Gln) + L-glutamine + ATP + H2O = L-glutaminyl-tRNA(Gln) + L-glutamate + ADP + phosphate + H(+). It catalyses the reaction L-aspartyl-tRNA(Asn) + L-glutamine + ATP + H2O = L-asparaginyl-tRNA(Asn) + L-glutamate + ADP + phosphate + 2 H(+). Its function is as follows. Allows the formation of correctly charged Asn-tRNA(Asn) or Gln-tRNA(Gln) through the transamidation of misacylated Asp-tRNA(Asn) or Glu-tRNA(Gln) in organisms which lack either or both of asparaginyl-tRNA or glutaminyl-tRNA synthetases. The reaction takes place in the presence of glutamine and ATP through an activated phospho-Asp-tRNA(Asn) or phospho-Glu-tRNA(Gln). The sequence is that of Aspartyl/glutamyl-tRNA(Asn/Gln) amidotransferase subunit C from Prochlorococcus marinus (strain MIT 9215).